A 194-amino-acid polypeptide reads, in one-letter code: NAD(P)H-quinone oxidoreductase subunit I (194 aa).

4Fe-4S ferredoxin-type domains lie at 55–84 (GRIH…VDWE) and 95–124 (NHYS…MTEE). 8 residues coordinate [4Fe-4S] cluster: cysteine 64, cysteine 67, cysteine 70, cysteine 74, cysteine 104, cysteine 107, cysteine 110, and cysteine 114. A disordered region spans residues 173–194 (DLPAGSRRAGLRPEEIVEQSQQ).

Belongs to the complex I 23 kDa subunit family. As to quaternary structure, NDH-1 is composed of at least 11 different subunits. [4Fe-4S] cluster is required as a cofactor.

Its subcellular location is the cellular thylakoid membrane. The enzyme catalyses a plastoquinone + NADH + (n+1) H(+)(in) = a plastoquinol + NAD(+) + n H(+)(out). The catalysed reaction is a plastoquinone + NADPH + (n+1) H(+)(in) = a plastoquinol + NADP(+) + n H(+)(out). Functionally, NDH-1 shuttles electrons from an unknown electron donor, via FMN and iron-sulfur (Fe-S) centers, to quinones in the respiratory and/or the photosynthetic chain. The immediate electron acceptor for the enzyme in this species is believed to be plastoquinone. Couples the redox reaction to proton translocation, and thus conserves the redox energy in a proton gradient. This Leptolyngbya boryana (Plectonema boryanum) protein is NAD(P)H-quinone oxidoreductase subunit I (ndhI).